The following is a 182-amino-acid chain: Small ribosomal subunit protein uS4c (182 aa).

The S4 RNA-binding domain maps to 82 to 143; the sequence is MRLDNILFRL…KERSKVLIQN (62 aa).

Belongs to the universal ribosomal protein uS4 family. In terms of assembly, part of the 30S ribosomal subunit. Contacts protein S5. The interaction surface between S4 and S5 is involved in control of translational fidelity.

The protein resides in the plastid. The protein localises to the chloroplast. One of the primary rRNA binding proteins, it binds directly to 16S rRNA where it nucleates assembly of the body of the 30S subunit. Its function is as follows. With S5 and S12 plays an important role in translational accuracy. The chain is Small ribosomal subunit protein uS4c (rps4) from Alophia veracruzana (Mexican pine woods lily).